The sequence spans 481 residues: Sulfate adenylyltransferase subunit 1 (481 aa).

In terms of domain architecture, tr-type G spans 22–236 (KDLLRFITCG…LLDSIRLDAD (215 aa)). The tract at residues 31-38 (GSVDDGKS) is G1. 31-38 (GSVDDGKS) provides a ligand contact to GTP. The segment at 89-93 (GITID) is G2. The segment at 110 to 113 (DCPG) is G3. GTP-binding positions include 110–114 (DCPGH) and 165–168 (NKMD). Residues 165-168 (NKMD) are G4. Residues 202–204 (SAL) are G5.

It belongs to the TRAFAC class translation factor GTPase superfamily. Classic translation factor GTPase family. CysN/NodQ subfamily. In terms of assembly, heterodimer composed of CysD, the smaller subunit, and CysN.

The catalysed reaction is sulfate + ATP + H(+) = adenosine 5'-phosphosulfate + diphosphate. The protein operates within sulfur metabolism; hydrogen sulfide biosynthesis; sulfite from sulfate: step 1/3. With CysD forms the ATP sulfurylase (ATPS) that catalyzes the adenylation of sulfate producing adenosine 5'-phosphosulfate (APS) and diphosphate, the first enzymatic step in sulfur assimilation pathway. APS synthesis involves the formation of a high-energy phosphoric-sulfuric acid anhydride bond driven by GTP hydrolysis by CysN coupled to ATP hydrolysis by CysD. The protein is Sulfate adenylyltransferase subunit 1 of Laribacter hongkongensis (strain HLHK9).